Here is a 459-residue protein sequence, read N- to C-terminus: Argininosuccinate lyase (459 aa).

The protein belongs to the lyase 1 family. Argininosuccinate lyase subfamily.

It is found in the cytoplasm. The enzyme catalyses 2-(N(omega)-L-arginino)succinate = fumarate + L-arginine. Its pathway is amino-acid biosynthesis; L-arginine biosynthesis; L-arginine from L-ornithine and carbamoyl phosphate: step 3/3. This chain is Argininosuccinate lyase, found in Staphylococcus aureus (strain MRSA252).